A 331-amino-acid polypeptide reads, in one-letter code: Putative lipoprotein YerB (331 aa).

Residues 1 to 19 (MKKWMTVCALCFVFFLLVS) form the signal peptide. Cys20 is lipidated: N-palmitoyl cysteine. Cys20 carries S-diacylglycerol cysteine lipidation. At Thr97 the chain carries Phosphothreonine. Ser103 carries the phosphoserine modification.

In terms of assembly, interacts with PcrA. The interaction is not essential for cell viability or repair of UV-induced lesions.

The protein resides in the cell membrane. This is Putative lipoprotein YerB (yerB) from Bacillus subtilis (strain 168).